We begin with the raw amino-acid sequence, 259 residues long: Ubiquinone biosynthesis protein COQ4 homolog, mitochondrial (259 aa).

4 residues coordinate Zn(2+): His162, Asp163, His166, and Glu178.

Belongs to the COQ4 family. As to quaternary structure, component of a multi-subunit COQ enzyme complex. The cofactor is Zn(2+).

It is found in the mitochondrion inner membrane. The enzyme catalyses a 4-hydroxy-3-methoxy-5-(all-trans-polyprenyl)benzoate + H(+) = a 2-methoxy-6-(all-trans-polyprenyl)phenol + CO2. It functions in the pathway cofactor biosynthesis; ubiquinone biosynthesis. Its function is as follows. Lyase that catalyzes the C1-decarboxylation of 4-hydroxy-3-methoxy-5-(all-trans-polyprenyl)benzoic acid into 2-methoxy-6-(all-trans-polyprenyl)phenol during ubiquinone biosynthesis. The polypeptide is Ubiquinone biosynthesis protein COQ4 homolog, mitochondrial (Bombyx mori (Silk moth)).